The following is a 1011-amino-acid chain: Protein translocase subunit SecA, chloroplastic (1011 aa).

A compositionally biased stretch (polar residues) spans M1 to P17. A disordered region spans residues M1–H22. Residues M1–V59 constitute a chloroplast transit peptide. ATP is bound at residue M164–T171. The segment at Q976–S1011 is disordered.

This sequence belongs to the SecA family.

Its subcellular location is the plastid. It is found in the chloroplast stroma. The protein localises to the chloroplast thylakoid membrane. It catalyses the reaction ATP + H2O + chloroplast-proteinSide 1 = ADP + phosphate + chloroplast-proteinSide 2.. Has a central role in coupling the hydrolysis of ATP to the transfer of proteins across the thylakoid membrane. Facilitates the transport of precursor proteins from the chloroplast stroma to thylakoid lumen. This Pisum sativum (Garden pea) protein is Protein translocase subunit SecA, chloroplastic.